Here is an 81-residue protein sequence, read N- to C-terminus: Photosystem I iron-sulfur center (81 aa).

2 4Fe-4S ferredoxin-type domains span residues 2-31 and 39-68; these read AHIV…MVPW and MASA…VRVY. Residues C11, C14, C17, C21, C48, C51, C54, and C58 each coordinate [4Fe-4S] cluster.

The eukaryotic PSI reaction center is composed of at least 11 subunits. It depends on [4Fe-4S] cluster as a cofactor.

It is found in the plastid. The protein resides in the chloroplast thylakoid membrane. The catalysed reaction is reduced [plastocyanin] + hnu + oxidized [2Fe-2S]-[ferredoxin] = oxidized [plastocyanin] + reduced [2Fe-2S]-[ferredoxin]. Functionally, apoprotein for the two 4Fe-4S centers FA and FB of photosystem I (PSI); essential for photochemical activity. FB is the terminal electron acceptor of PSI, donating electrons to ferredoxin. The C-terminus interacts with PsaA/B/D and helps assemble the protein into the PSI complex. Required for binding of PsaD and PsaE to PSI. PSI is a plastocyanin/cytochrome c6-ferredoxin oxidoreductase, converting photonic excitation into a charge separation, which transfers an electron from the donor P700 chlorophyll pair to the spectroscopically characterized acceptors A0, A1, FX, FA and FB in turn. The chain is Photosystem I iron-sulfur center from Chlamydomonas reinhardtii (Chlamydomonas smithii).